The primary structure comprises 337 residues: Protein-methionine-sulfoxide reductase catalytic subunit MsrP (337 aa).

The tat-type signal signal peptide spans 1 to 50 (MLIKLPSASGSKESDVTPESIYLSRRTLLASSLAGLAVTALPRWASAADA). Residues Asn94, 97–98 (YE), Cys152, Thr187, Asn237, Arg242, and 253–255 (SVK) each bind Mo-molybdopterin.

It belongs to the MsrP family. As to quaternary structure, heterodimer of a catalytic subunit (MsrP) and a heme-binding subunit (MsrQ). Mo-molybdopterin serves as cofactor. In terms of processing, predicted to be exported by the Tat system. The position of the signal peptide cleavage has not been experimentally proven.

The protein localises to the periplasm. The catalysed reaction is L-methionyl-[protein] + a quinone + H2O = L-methionyl-(S)-S-oxide-[protein] + a quinol. It catalyses the reaction L-methionyl-[protein] + a quinone + H2O = L-methionyl-(R)-S-oxide-[protein] + a quinol. Part of the MsrPQ system that repairs oxidized periplasmic proteins containing methionine sulfoxide residues (Met-O), using respiratory chain electrons. Thus protects these proteins from oxidative-stress damage caused by reactive species of oxygen and chlorine generated by the host defense mechanisms. MsrPQ is essential for the maintenance of envelope integrity under bleach stress, rescuing a wide series of structurally unrelated periplasmic proteins from methionine oxidation. The catalytic subunit MsrP is non-stereospecific, being able to reduce both (R-) and (S-) diastereoisomers of methionine sulfoxide. The polypeptide is Protein-methionine-sulfoxide reductase catalytic subunit MsrP (Pseudomonas syringae pv. tomato (strain ATCC BAA-871 / DC3000)).